Here is a 155-residue protein sequence, read N- to C-terminus: Regulatory protein RecX (155 aa).

It belongs to the RecX family.

It is found in the cytoplasm. Functionally, modulates RecA activity. The polypeptide is Regulatory protein RecX (Vibrio campbellii (strain ATCC BAA-1116)).